A 1065-amino-acid polypeptide reads, in one-letter code: Carbamoyl phosphate synthase large chain (1065 aa).

The segment at 1-401 (MPKRTDIETI…AMLKAVRSLE (401 aa)) is carboxyphosphate synthetic domain. Arg129, Arg169, Gly175, Gly176, Lys208, Ile210, Glu215, Gly241, Ile242, His243, Gln284, and Glu298 together coordinate ATP. Positions 133 to 327 (RNLMYELGAP…IAKLAAKIAV (195 aa)) constitute an ATP-grasp 1 domain. Mg(2+) contacts are provided by Gln284, Glu298, and Asn300. Mn(2+)-binding residues include Gln284, Glu298, and Asn300. Residues 402–546 (TGQVHLELKH…YGTYEEENES (145 aa)) form an oligomerization domain region. Residues 547–929 (IKSEKPSVVV…ALYKGLVAAG (383 aa)) are carbamoyl phosphate synthetic domain. Positions 671-861 (EQALRDLNIP…MANIATKAIL (191 aa)) constitute an ATP-grasp 2 domain. The ATP site is built by Arg707, Arg746, Leu748, Glu752, Gly777, Val778, His779, Ser780, Gln820, and Glu832. Residues Gln820, Glu832, and Asn834 each coordinate Mg(2+). 3 residues coordinate Mn(2+): Gln820, Glu832, and Asn834. Residues 930–1065 (MEIRTEGTVL…EEMPKAEVVH (136 aa)) form the MGS-like domain. An allosteric domain region spans residues 930–1065 (MEIRTEGTVL…EEMPKAEVVH (136 aa)).

Belongs to the CarB family. In terms of assembly, composed of two chains; the small (or glutamine) chain promotes the hydrolysis of glutamine to ammonia, which is used by the large (or ammonia) chain to synthesize carbamoyl phosphate. Tetramer of heterodimers (alpha,beta)4. Mg(2+) serves as cofactor. It depends on Mn(2+) as a cofactor.

The enzyme catalyses hydrogencarbonate + L-glutamine + 2 ATP + H2O = carbamoyl phosphate + L-glutamate + 2 ADP + phosphate + 2 H(+). It catalyses the reaction hydrogencarbonate + NH4(+) + 2 ATP = carbamoyl phosphate + 2 ADP + phosphate + 2 H(+). The protein operates within amino-acid biosynthesis; L-arginine biosynthesis; carbamoyl phosphate from bicarbonate: step 1/1. It functions in the pathway pyrimidine metabolism; UMP biosynthesis via de novo pathway; (S)-dihydroorotate from bicarbonate: step 1/3. In terms of biological role, large subunit of the glutamine-dependent carbamoyl phosphate synthetase (CPSase). CPSase catalyzes the formation of carbamoyl phosphate from the ammonia moiety of glutamine, carbonate, and phosphate donated by ATP, constituting the first step of 2 biosynthetic pathways, one leading to arginine and/or urea and the other to pyrimidine nucleotides. The large subunit (synthetase) binds the substrates ammonia (free or transferred from glutamine from the small subunit), hydrogencarbonate and ATP and carries out an ATP-coupled ligase reaction, activating hydrogencarbonate by forming carboxy phosphate which reacts with ammonia to form carbamoyl phosphate. The chain is Carbamoyl phosphate synthase large chain from Lysinibacillus sphaericus (strain C3-41).